The chain runs to 169 residues: Cell division inhibitor SulA (169 aa).

The segment at 106–112 (ALRTGNY) is ftsZ binding. The tract at residues 162-169 (KIHSNLYH) is lon protease binding.

Belongs to the SulA family. Interacts with FtsZ. In terms of processing, is rapidly cleaved and degraded by the Lon protease once DNA damage is repaired.

In terms of biological role, component of the SOS system and an inhibitor of cell division. Accumulation of SulA causes rapid cessation of cell division and the appearance of long, non-septate filaments. In the presence of GTP, binds a polymerization-competent form of FtsZ in a 1:1 ratio, thus inhibiting FtsZ polymerization and therefore preventing it from participating in the assembly of the Z ring. This mechanism prevents the premature segregation of damaged DNA to daughter cells during cell division. The protein is Cell division inhibitor SulA of Shigella boydii serotype 4 (strain Sb227).